The following is a 586-amino-acid chain: Cryptochrome-1 (586 aa).

In terms of domain architecture, Photolyase/cryptochrome alpha/beta spans 3 to 132 (VNAVHWFRKG…EVIVRISHTL (130 aa)). Lys-11 is covalently cross-linked (Glycyl lysine isopeptide (Lys-Gly) (interchain with G-Cter in ubiquitin)). The LIR 1 motif lies at 50–54 (NRWRF). Ser-71 bears the Phosphoserine; by AMPK mark. The LIR 2 signature appears at 82-87 (DVFPRL). Residue Lys-107 forms a Glycyl lysine isopeptide (Lys-Gly) (interchain with G-Cter in ubiquitin) linkage. An LIR 3 motif is present at residues 151–156 (KRFQTL). Lys-159 participates in a covalent cross-link: Glycyl lysine isopeptide (Lys-Gly) (interchain with G-Cter in ubiquitin). Ser-247 bears the Phosphoserine; by MAPK mark. Residue Ser-252 coordinates FAD. Short sequence motifs (LIR) lie at residues 255–260 (LRFGCL) and 271–276 (DLYKKV). Ser-280 is modified (phosphoserine; by AMPK). The LIR 6 motif lies at 285–290 (SLYGQL). Position 289 (Gln-289) interacts with FAD. Lys-329 is covalently cross-linked (Glycyl lysine isopeptide (Lys-Gly) (interchain with G-Cter in ubiquitin)). An LIR 7 motif is present at residues 335–339 (TGFPW). FAD is bound at residue His-355. The required for inhibition of CLOCK-BMAL1-mediated transcription stretch occupies residues 371–470 (WISWEEGMKV…LIGINYPKPM (100 aa)). The LIR 8 motif lies at 379-384 (KVFEEL). 387 to 389 (DAD) provides a ligand contact to FAD. 3 short sequence motifs (LIR) span residues 395–400 (GSWMWL), 411–416 (HCYCPV), and 430–435 (RRYLPV). Residues 471–493 (VNHAEASRLNIERMKQIYQQLSR) form an interaction with TIMELESS region. Lys-485 is covalently cross-linked (Glycyl lysine isopeptide (Lys-Gly) (interchain with G-Cter in ubiquitin)). Short sequence motifs (LIR) lie at residues 486 to 491 (QIYQQL) and 492 to 497 (SRYRGL). The segment covering 545 to 559 (QQTHLLKQGRSSMGT) has biased composition (polar residues). The interval 545–586 (QQTHLLKQGRSSMGTGLSGGKRPSQEEDTQSIGPKVQRQSTN) is disordered. A Glycyl lysine isopeptide (Lys-Gly) (interchain with G-Cter in ubiquitin) cross-link involves residue Lys-565. A Phosphoserine modification is found at Ser-568.

It belongs to the DNA photolyase class-1 family. In terms of assembly, component of the circadian core oscillator, which includes the CRY proteins, CLOCK or NPAS2, BMAL1 or BMAL2, CSNK1D and/or CSNK1E, TIMELESS, and the PER proteins. Interacts directly with TIMELESS. Interacts directly with PER1, PER2 and PER3; interaction with PER2 inhibits its ubiquitination and vice versa. Interacts with FBXL21. Interacts with FBXL3. Interacts with CLOCK-BMAL1 independently of PER2 and DNA. Interacts with HDAC1, HDAC2 and SIN3B. Interacts with nuclear receptors AR, NR1D1, NR3C1/GR, RORA and RORC; the interaction with at least NR3C1/GR is ligand dependent. Interacts with PRKDC. Interacts with the G protein subunit alpha GNAS; the interaction may block GPCR-mediated regulation of cAMP concentrations. Interacts with PRMT5. Interacts with EZH2. Interacts with MYBBP1A, DOCK7, HNRNPU, RPL7A, RPL8 and RPS3. Interacts with PPP5C (via TPR repeats). Interacts with MAP1LC3B. Interacts with CLOCK. Interacts with BMAL1. Interacts weakly with HDAC3; this interaction is enhanced in the presence of FBXL3. Interacts with TRIM28, KCTD5 and DDB1. Interacts with FOXO1. Interacts with DTL and DDB1-CUL4A complex. Interacts with HNF4A. Interacts with PSMD2 in a KDM8-dependent manner. Interacts with KDM8 in a FBXL3-dependent manner. Interacts with PPARG in a ligand-dependent manner. Interacts with PPARD (via domain NR LBD) and NR1I2 (via domain NR LBD) in a ligand-dependent manner. Interacts with PPARA, NR1I3 and VDR. The cofactor is FAD. (6R)-5,10-methylene-5,6,7,8-tetrahydrofolate serves as cofactor. Phosphorylation on Ser-247 by MAPK is important for the inhibition of CLOCK-BMAL1-mediated transcriptional activity. Phosphorylation by CSNK1E requires interaction with PER1 or PER2. Phosphorylation at Ser-71 and Ser-280 by AMPK decreases protein stability. Phosphorylation at Ser-568 exhibits a robust circadian rhythm with a peak at CT8, increases protein stability, prevents SCF(FBXL3)-mediated degradation and is antagonized by interaction with PRKDC. Post-translationally, ubiquitinated by the SCF(FBXL3) and SCF(FBXL21) complexes, regulating the balance between degradation and stabilization. The SCF(FBXL3) complex is mainly nuclear and mediates ubiquitination and subsequent degradation of CRY1. In contrast, cytoplasmic SCF(FBXL21) complex-mediated ubiquitination leads to stabilize CRY1 and counteract the activity of the SCF(FBXL3) complex. The SCF(FBXL3) and SCF(FBXL21) complexes probably mediate ubiquitination at different Lys residues. Ubiquitination at Lys-11 and Lys-107 are specifically ubiquitinated by the SCF(FBXL21) complex but not by the SCF(FBXL3) complex. Ubiquitination may be inhibited by PER2. Deubiquitinated by USP7. In terms of processing, undergoes autophagy-mediated degradation in the liver in a time-dependent manner. Autophagic degradation of CRY1 (an inhibitor of gluconeogenesis) occurs during periods of reduced feeding allowing induction of gluconeogenesis and maintenance of blood glucose levels.

The protein localises to the cytoplasm. It localises to the nucleus. Functionally, transcriptional repressor which forms a core component of the circadian clock. The circadian clock, an internal time-keeping system, regulates various physiological processes through the generation of approximately 24 hour circadian rhythms in gene expression, which are translated into rhythms in metabolism and behavior. It is derived from the Latin roots 'circa' (about) and 'diem' (day) and acts as an important regulator of a wide array of physiological functions including metabolism, sleep, body temperature, blood pressure, endocrine, immune, cardiovascular, and renal function. Consists of two major components: the central clock, residing in the suprachiasmatic nucleus (SCN) of the brain, and the peripheral clocks that are present in nearly every tissue and organ system. Both the central and peripheral clocks can be reset by environmental cues, also known as Zeitgebers (German for 'timegivers'). The predominant Zeitgeber for the central clock is light, which is sensed by retina and signals directly to the SCN. The central clock entrains the peripheral clocks through neuronal and hormonal signals, body temperature and feeding-related cues, aligning all clocks with the external light/dark cycle. Circadian rhythms allow an organism to achieve temporal homeostasis with its environment at the molecular level by regulating gene expression to create a peak of protein expression once every 24 hours to control when a particular physiological process is most active with respect to the solar day. Transcription and translation of core clock components (CLOCK, NPAS2, BMAL1, BMAL2, PER1, PER2, PER3, CRY1 and CRY2) plays a critical role in rhythm generation, whereas delays imposed by post-translational modifications (PTMs) are important for determining the period (tau) of the rhythms (tau refers to the period of a rhythm and is the length, in time, of one complete cycle). A diurnal rhythm is synchronized with the day/night cycle, while the ultradian and infradian rhythms have a period shorter and longer than 24 hours, respectively. Disruptions in the circadian rhythms contribute to the pathology of cardiovascular diseases, cancer, metabolic syndromes and aging. A transcription/translation feedback loop (TTFL) forms the core of the molecular circadian clock mechanism. Transcription factors, CLOCK or NPAS2 and BMAL1 or BMAL2, form the positive limb of the feedback loop, act in the form of a heterodimer and activate the transcription of core clock genes and clock-controlled genes (involved in key metabolic processes), harboring E-box elements (5'-CACGTG-3') within their promoters. The core clock genes: PER1/2/3 and CRY1/2 which are transcriptional repressors form the negative limb of the feedback loop and interact with the CLOCK|NPAS2-BMAL1|BMAL2 heterodimer inhibiting its activity and thereby negatively regulating their own expression. This heterodimer also activates nuclear receptors NR1D1/2 and RORA/B/G, which form a second feedback loop and which activate and repress BMAL1 transcription, respectively. CRY1 and CRY2 have redundant functions but also differential and selective contributions at least in defining the pace of the SCN circadian clock and its circadian transcriptional outputs. More potent transcriptional repressor in cerebellum and liver than CRY2, though more effective in lengthening the period of the SCN oscillator. On its side, CRY2 seems to play a critical role in tuning SCN circadian period by opposing the action of CRY1. With CRY2, is dispensable for circadian rhythm generation but necessary for the development of intercellular networks for rhythm synchrony. Capable of translocating circadian clock core proteins such as PER proteins to the nucleus. Interacts with CLOCK-BMAL1 independently of PER proteins and is found at CLOCK-BMAL1-bound sites, suggesting that CRY may act as a molecular gatekeeper to maintainCLOCK-BMAL1 in a poised and repressed state until the proper time for transcriptional activation. Represses the CLOCK-BMAL1 induced transcription of BHLHE40/DEC1, ATF4, MTA1, KLF10 and NAMPT. May repress circadian target genes expression in collaboration with HDAC1 and HDAC2 through histone deacetylation. Mediates the clock-control activation of ATR and modulates ATR-mediated DNA damage checkpoint. In liver, mediates circadian regulation of cAMP signaling and gluconeogenesis by binding to membrane-coupled G proteins and blocking glucagon-mediated increases in intracellular cAMP concentrations and CREB1 phosphorylation. Inhibits hepatic gluconeogenesis by decreasing nuclear FOXO1 levels that down-regulates gluconeogenic gene expression. Besides its role in the maintenance of the circadian clock, is also involved in the regulation of other processes. Represses glucocorticoid receptor NR3C1/GR-induced transcriptional activity by binding to glucocorticoid response elements (GREs). Plays a key role in glucose and lipid metabolism modulation, in part, through the transcriptional regulation of genes involved in these pathways, such as LEP or ACSL4. Represses PPARD and its target genes in the skeletal muscle and limits exercise capacity. Plays an essential role in the generation of circadian rhythms in the retina. Represses the transcriptional activity of NR1I2. This chain is Cryptochrome-1 (CRY1), found in Macaca fascicularis (Crab-eating macaque).